A 575-amino-acid chain; its full sequence is Arginine--tRNA ligase (575 aa).

Positions 131-141 match the 'HIGH' region motif; it reads ANPNGPLHIGH.

The protein belongs to the class-I aminoacyl-tRNA synthetase family.

The protein resides in the cytoplasm. It catalyses the reaction tRNA(Arg) + L-arginine + ATP = L-arginyl-tRNA(Arg) + AMP + diphosphate. This is Arginine--tRNA ligase from Methanobrevibacter smithii (strain ATCC 35061 / DSM 861 / OCM 144 / PS).